The sequence spans 519 residues: MGLIEIVLLLVGMAVGAATGFILHKIVSAKRLQDARELADRIIEEARKEAQAHKKEVLIQGQDELFNQKRELEREFKEREHELKIRERRLQEQTERLEEKLEKLAQKEHDALSVEKELNRRERTLGLKEEELTQKIAEQDKKLQEISGLTSEEAKARIFSEVEARTRHEAGKMIRVIETEAKETASRSAQKILATAVQRYAGDFVNEQTVTAVSLPSEDMKGRIIGREGRNIRALEAATGVDLIIDDTPETVILSAYSPLRRQIAKMALERLISDGRIHPARIEDIVRKCEQELEVQLREVGEQATFDVGVHGIHPEIIKLLGQLKYRTSFSQNVLQHSMEVASLCGIMAAELGMDEKRAKRAGLLHDIGKAVDHDVEGPHAVIGADLAKKYGESKDIIHAIAAHHEDVPPKSALAVLVQAADSLSGARPGARKELLENYVKRLEDLEGIANGMEGVSKAYAIQAGREIRVLVNSDEVDDDTTYMLCKDISEKIEKNLTYPGQIRVTVIRERRAVGVAK.

A helical membrane pass occupies residues Leu-3–Leu-23. Residues Thr-209–Leu-272 enclose the KH domain. An HD domain is found at Val-335–Ala-428.

It belongs to the RNase Y family.

The protein resides in the cell membrane. Endoribonuclease that initiates mRNA decay. The chain is Ribonuclease Y from Oleidesulfovibrio alaskensis (strain ATCC BAA-1058 / DSM 17464 / G20) (Desulfovibrio alaskensis).